The chain runs to 900 residues: Translation initiation factor IF-2 (900 aa).

The segment at His-48–Asn-310 is disordered. Residues Ser-68–Val-82 show a composition bias toward polar residues. Composition is skewed to basic and acidic residues over residues Glu-85–Ile-98 and Gln-108–Val-164. Positions Thr-165 to Ala-176 are enriched in polar residues. Residues Gln-177–Asp-237 are compositionally biased toward basic and acidic residues. Basic residues predominate over residues Thr-263 to Asn-277. A compositionally biased stretch (basic and acidic residues) spans Arg-278–Ala-291. Residues Phe-399–Lys-568 form the tr-type G domain. The tract at residues Gly-408 to Thr-415 is G1. A GTP-binding site is contributed by Gly-408–Thr-415. Residues Gly-433 to His-437 are G2. The tract at residues Asp-454 to Gly-457 is G3. Residues Asp-454–His-458 and Asn-508–Asp-511 each bind GTP. The interval Asn-508 to Asp-511 is G4. Residues Ser-544–Lys-546 form a G5 region.

This sequence belongs to the TRAFAC class translation factor GTPase superfamily. Classic translation factor GTPase family. IF-2 subfamily.

It is found in the cytoplasm. One of the essential components for the initiation of protein synthesis. Protects formylmethionyl-tRNA from spontaneous hydrolysis and promotes its binding to the 30S ribosomal subunits. Also involved in the hydrolysis of GTP during the formation of the 70S ribosomal complex. The protein is Translation initiation factor IF-2 of Pectobacterium atrosepticum (strain SCRI 1043 / ATCC BAA-672) (Erwinia carotovora subsp. atroseptica).